Here is a 309-residue protein sequence, read N- to C-terminus: MVKVYAPASIGNVSVGFDVLGAAVSPVDGSLLGDCVSVEAADLFSLRNEGRFVSKLPDNPKENIVYQCWELFCQEIGKTVPVAMTLEKNMPIGSGLGSSACSVVAGLMAMNEFCGKPLDDTRLLTLMGELEGRISGSVHYDNVAPCFLGGVQLMLEENGIISQPVPSFDDWLWVMAYPGIKVSTAEARAILPAQYRRQDCISHGRYLAGFIHACHTGQAALAAKLMKDVIAEPYRTKLLPGFAAARQAAEDIGALACGISGSGPTLFSVCNDMTSAQRLADWLRDNYLQNDEGFVHICRLDTTGARQLG.

91-101 (PIGSGLGSSAC) serves as a coordination point for ATP.

Belongs to the GHMP kinase family. Homoserine kinase subfamily.

Its subcellular location is the cytoplasm. The enzyme catalyses L-homoserine + ATP = O-phospho-L-homoserine + ADP + H(+). It participates in amino-acid biosynthesis; L-threonine biosynthesis; L-threonine from L-aspartate: step 4/5. Catalyzes the ATP-dependent phosphorylation of L-homoserine to L-homoserine phosphate. In Pectobacterium carotovorum subsp. carotovorum (strain PC1), this protein is Homoserine kinase.